We begin with the raw amino-acid sequence, 865 residues long: TATA box-binding protein-associated factor RNA polymerase I subunit B (865 aa).

An RRN7-type zinc finger spans residues 1-33 (MHSAKNEKCNACGGYRFSVNDGFKYCDRCGALF). C9, C12, C26, and C29 together coordinate Zn(2+). The segment at 35–99 (NFEELEEEEG…DFLQQQAIKG (65 aa)) is B-reader. A B-linker region spans residues 100-111 (EELELPHDATPD). Positions 112–348 (YLYRLALRLF…SQPERMKQGE (237 aa)) are N-terminal cyclin fold. Residues 233-261 (DEDGDQDAQGGQQLDDLTLETTQNPDESI) form a disordered region. Residues 239 to 248 (DAQGGQQLDD) show a composition bias toward low complexity. Positions 252–261 (ETTQNPDESI) are enriched in polar residues. A C-terminal cyclin fold region spans residues 349-496 (VVKPTIVDYA…LLTLRLTFQL (148 aa)).

The protein belongs to the RRN7/TAF1B family.

It localises to the nucleus. Its subcellular location is the nucleolus. Functionally, component of RNA polymerase I core factor complex that acts as a GTF2B/TFIIB-like factor and plays a key role in multiple steps during transcription initiation such as pre-initiation complex (PIC) assembly and postpolymerase recruitment events in polymerase I (Pol I) transcription. Binds rDNA promoters and plays a role in Pol I recruitment. The chain is TATA box-binding protein-associated factor RNA polymerase I subunit B from Caenorhabditis elegans.